Consider the following 670-residue polypeptide: UvrABC system protein B (670 aa).

In terms of domain architecture, Helicase ATP-binding spans 26 to 183; that stretch reads EGLENGLAHQ…RRLSELQYSR (158 aa). 39-46 provides a ligand contact to ATP; sequence GVTGSGKT. Positions 92–115 match the Beta-hairpin motif; the sequence is YYDYYQPEAYVPSSDTFIEKDASV. A Helicase C-terminal domain is found at 431-597; that stretch reads QVDDLLSEIR…GLNKKIGDIL (167 aa). Positions 600-620 are disordered; sequence GQPSTRGKGKGRGGKVADTNN. Positions 630 to 665 constitute a UVR domain; it reads DQKIRELEAKMYTHAQNLEFEQAAELRDQVHQLRQQ.

The protein belongs to the UvrB family. In terms of assembly, forms a heterotetramer with UvrA during the search for lesions. Interacts with UvrC in an incision complex.

The protein localises to the cytoplasm. The UvrABC repair system catalyzes the recognition and processing of DNA lesions. A damage recognition complex composed of 2 UvrA and 2 UvrB subunits scans DNA for abnormalities. Upon binding of the UvrA(2)B(2) complex to a putative damaged site, the DNA wraps around one UvrB monomer. DNA wrap is dependent on ATP binding by UvrB and probably causes local melting of the DNA helix, facilitating insertion of UvrB beta-hairpin between the DNA strands. Then UvrB probes one DNA strand for the presence of a lesion. If a lesion is found the UvrA subunits dissociate and the UvrB-DNA preincision complex is formed. This complex is subsequently bound by UvrC and the second UvrB is released. If no lesion is found, the DNA wraps around the other UvrB subunit that will check the other stand for damage. This Yersinia enterocolitica serotype O:8 / biotype 1B (strain NCTC 13174 / 8081) protein is UvrABC system protein B.